A 250-amino-acid polypeptide reads, in one-letter code: Triosephosphate isomerase (250 aa).

Substrate is bound at residue 9-11 (NWK). The Electrophile role is filled by His95. The Proton acceptor role is filled by Glu167. Residues Gly173, Ser213, and 234-235 (GG) each bind substrate.

The protein belongs to the triosephosphate isomerase family. In terms of assembly, homodimer.

The protein resides in the cytoplasm. It carries out the reaction D-glyceraldehyde 3-phosphate = dihydroxyacetone phosphate. It functions in the pathway carbohydrate biosynthesis; gluconeogenesis. The protein operates within carbohydrate degradation; glycolysis; D-glyceraldehyde 3-phosphate from glycerone phosphate: step 1/1. Its function is as follows. Involved in the gluconeogenesis. Catalyzes stereospecifically the conversion of dihydroxyacetone phosphate (DHAP) to D-glyceraldehyde-3-phosphate (G3P). The protein is Triosephosphate isomerase of Chloroflexus aurantiacus (strain ATCC 29366 / DSM 635 / J-10-fl).